Reading from the N-terminus, the 154-residue chain is Spermatogenesis-associated protein 19, mitochondrial (154 aa).

The transit peptide at 1–24 (MIITTWIMYILARKSIGLPFPPRV) directs the protein to the mitochondrion. 2 positions are modified to phosphoserine: S26 and S116.

As to expression, expressed in the testis.

The protein localises to the mitochondrion outer membrane. The protein resides in the mitochondrion. Its subcellular location is the cell projection. It localises to the cilium. It is found in the flagellum. Functionally, essential for sperm motility and male fertility. Plays an important role in sperm motility by regulating the organization and function of the mitochondria and is also required for correct sperm midpiece assembly. In Rattus norvegicus (Rat), this protein is Spermatogenesis-associated protein 19, mitochondrial (Spata19).